The following is a 472-amino-acid chain: Poly(A) polymerase catalytic subunit (472 aa).

Catalysis depends on residues Asp-191 and Asp-193.

The protein belongs to the poxviridae poly(A) polymerase catalytic subunit family. In terms of assembly, heterodimer of a large (catalytic) subunit and a small (regulatory) subunit.

The catalysed reaction is RNA(n) + ATP = RNA(n)-3'-adenine ribonucleotide + diphosphate. Functionally, polymerase that creates the 3'-poly(A) tail of mRNA's. In Capra hircus (Goat), this protein is Poly(A) polymerase catalytic subunit (PAPL).